The following is a 285-amino-acid chain: Probable endonuclease 4 (285 aa).

His69, His109, Glu145, Asp179, His182, His216, Asp229, His231, and Glu261 together coordinate Zn(2+).

Belongs to the AP endonuclease 2 family. Zn(2+) is required as a cofactor.

The catalysed reaction is Endonucleolytic cleavage to 5'-phosphooligonucleotide end-products.. Its function is as follows. Endonuclease IV plays a role in DNA repair. It cleaves phosphodiester bonds at apurinic or apyrimidinic (AP) sites, generating a 3'-hydroxyl group and a 5'-terminal sugar phosphate. This Salmonella typhi protein is Probable endonuclease 4.